We begin with the raw amino-acid sequence, 598 residues long: MAQVAGKKLTVAPEAAKPPGIPGSSSAVKEIPEILVDPRTRRRYLRGRFLGKGGFAKCYEITDLESREVFAGKIVPKTMLLKPHQKDKMTMEIAIQRSLDHRHVVGFHGFFEDNDFVYVVLELCRRRSLLELHKRRKAVTEPEARYYLKQTISGCQYLHSNRVIHRDLKLGNLFLNDEMEVKIGDFGLATKVEYDGERKKTLCGTPNYIAPEVLGKKGHSFEVDIWSIGCIMYTLLVGKPPFETSCLKETYMRIKKNEYSIPKHINPVAAALIQKMLRSDPTSRPTIDDLLNDEFFTSGYIPSRLPTTCLTVPPRFSIAPSTIDQSLRKPLTAINKGQDSPLVEKQVAPAKEEEMQQPEFTEPADCYLSEMLQQLTCLNAVKPSERALIRQEEAEDPASIPIFWISKWVDYSDKYGLGYQLCDNSVGVLFNDSTRLIMYNDGDSLQYIERNNTESYLNVRSYPTTLTKKITLLKYFRNYMSEHLLKAGANTTPREGDELARLPFLRTWFRTRSAIILHLSNGTVQINFFQDHTKIILCPLMAAVSYIDEKREFRTYKLSLIQEFGCCKELASRLRYARTMVEKLQSSKSAVAHVKASA.

The interval 1-23 (MAQVAGKKLTVAPEAAKPPGIPG) is disordered. The residue at position 10 (T10) is a Phosphothreonine; by PKA; in vitro. A phosphoserine mark is found at S25 and S26. The Protein kinase domain maps to 44 to 296 (YLRGRFLGKG…IDDLLNDEFF (253 aa)). Residues 50–58 (LGKGGFAKC), K73, and E122 each bind ATP. Catalysis depends on D167, which acts as the Proton acceptor. ATP is bound by residues 169–172 (KLGN) and D185. The tract at residues 185-212 (DFGLATKVEYDGERKKTLCGTPNYIAPE) is activation loop. Residue T201 is modified to Phosphothreonine; by PKA. S260 and S326 each carry phosphoserine; by autocatalysis. The D-box that targets the protein for proteasomal degradation in anaphase motif lies at 328–331 (RKPL). S340 carries the phosphoserine; by CDK1 modification. Residues 404 to 482 (WISKWVDYSD…LKYFRNYMSE (79 aa)) form the POLO box 1 domain. The interval 487–501 (AGANTTPREGDELAR) is linker. The 83-residue stretch at 504–586 (FLRTWFRTRS…ARTMVEKLQS (83 aa)) folds into the POLO box 2 domain. Positions 532–534 (HTK) are important for interaction with phosphorylated proteins.

It belongs to the protein kinase superfamily. Ser/Thr protein kinase family. As to quaternary structure, interacts with plk1 and kif2a. Interacts with fbxo5. In terms of processing, activated by phosphorylation on Thr-201 during M phase. Phosphorylated by stk10, leading to activation during oocyte maturation. Post-translationally, ubiquitinated by the anaphase promoting complex/cyclosome (APC/C) in anaphase and following DNA damage, leading to its degradation by the proteasome. Protein levels are down-regulated by proteasomal degradation in anaphase.

It localises to the nucleus. Its subcellular location is the cytoplasm. The protein localises to the cytoskeleton. It is found in the microtubule organizing center. The protein resides in the centrosome. It localises to the spindle. Its subcellular location is the midbody. It catalyses the reaction L-seryl-[protein] + ATP = O-phospho-L-seryl-[protein] + ADP + H(+). The catalysed reaction is L-threonyl-[protein] + ATP = O-phospho-L-threonyl-[protein] + ADP + H(+). Activated by phosphorylation of Thr-201. Its function is as follows. Serine/threonine-protein kinase that performs several important functions throughout M phase of the cell cycle, including the regulation of centrosome maturation and spindle assembly, the removal of cohesins from chromosome arms, the inactivation of anaphase-promoting complex/cyclosome (APC/C) inhibitors, and the regulation of mitotic exit and cytokinesis. Polo-like kinase proteins act by binding and phosphorylating proteins that are already phosphorylated on a specific motif recognized by the POLO box domains. Phosphorylates cdc25, pkmyt1/myt1, stag2/sa2, tpx2. Plays multiple essential roles during mitosis. Phosphorylates the N-terminal domain of cdc25, which leads to cyclin b-cdc2 activation and mitotic entry. Also required for organization of bipolar spindles, and for exit from mitosis. Involved in kinetochore functions and sister chromatid cohesion by phosphorylating stag2/sa2. This is Serine/threonine-protein kinase PLK1 (plk1) from Xenopus laevis (African clawed frog).